Consider the following 290-residue polypeptide: MERTENLKKGEKGALLNIFAYVILAVVKLVIGILYHSEALRADGLNNGTDIVASVAVLIGLRISQRPADSDHPYGHYRAETISSLVASFIMMAVGIEVLIGGGKAIAGGTTETPNLIAAWTALGSAVFMYGIYLYNKRLAASIKSSALMAAAKDSRSDAFVSAGAFIGVFSSQLKLPWVDPVTAFIIGIIICKTAWDIFKDASHSLTDGFHLKDLEPYKQTVGRIENVHRLKDVKARYLGSTVHIEMVITVDPKLTVEEGHGVADEVEDKIKHEHDVTHVHVHVEPDDIK.

5 helical membrane-spanning segments follow: residues 14–34 (ALLN…IGIL), 82–102 (ISSL…LIGG), 115–135 (NLIA…IYLY), 158–174 (DAFV…SSQL), and 176–196 (LPWV…KTAW).

This sequence belongs to the cation diffusion facilitator (CDF) transporter (TC 2.A.4) family.

It localises to the cell membrane. This is an uncharacterized protein from Bacillus subtilis (strain 168).